Here is a 176-residue protein sequence, read N- to C-terminus: Nucleoside triphosphate/diphosphate phosphatase (176 aa).

Arg23 (proton donor) is an active-site residue. Positions 87, 103, 105, 107, 120, and 123 each coordinate Mg(2+).

The protein belongs to the Ntdp family. The cofactor is Mg(2+).

It carries out the reaction a ribonucleoside 5'-triphosphate + H2O = a ribonucleoside 5'-diphosphate + phosphate + H(+). The catalysed reaction is a ribonucleoside 5'-diphosphate + H2O = a ribonucleoside 5'-phosphate + phosphate + H(+). Its function is as follows. Has nucleoside phosphatase activity towards nucleoside triphosphates and nucleoside diphosphates. The polypeptide is Nucleoside triphosphate/diphosphate phosphatase (Bacillus cereus (strain B4264)).